A 719-amino-acid chain; its full sequence is Probable disease resistance protein At4g14610 (719 aa).

Residues 25–73 (SLPENLAALQKAIEVLKTKHDDVKRRVDKEEFLGRRHRLSQVQVEIERL) adopt a coiled-coil conformation. In terms of domain architecture, NB-ARC spans 114–418 (EENLVAQVEE…NELEKILGCP (305 aa)). 156 to 163 (GMGGVGKT) contributes to the ATP binding site. LRR repeat units lie at residues 400-421 (AVRR…PTCP), 422-444 (QLTT…FFRF), and 447-469 (NLVV…ISEV).

This sequence belongs to the disease resistance NB-LRR family.

Functionally, probable disease resistance protein. The polypeptide is Probable disease resistance protein At4g14610 (Arabidopsis thaliana (Mouse-ear cress)).